The primary structure comprises 294 residues: Phosphatidylserine decarboxylase proenzyme (294 aa).

Catalysis depends on charge relay system; for autoendoproteolytic cleavage activity residues D100, H157, and S261. S261 serves as the catalytic Schiff-base intermediate with substrate; via pyruvic acid; for decarboxylase activity. S261 is subject to Pyruvic acid (Ser); by autocatalysis.

The protein belongs to the phosphatidylserine decarboxylase family. PSD-B subfamily. Prokaryotic type I sub-subfamily. In terms of assembly, heterodimer of a large membrane-associated beta subunit and a small pyruvoyl-containing alpha subunit. Pyruvate serves as cofactor. Post-translationally, is synthesized initially as an inactive proenzyme. Formation of the active enzyme involves a self-maturation process in which the active site pyruvoyl group is generated from an internal serine residue via an autocatalytic post-translational modification. Two non-identical subunits are generated from the proenzyme in this reaction, and the pyruvate is formed at the N-terminus of the alpha chain, which is derived from the carboxyl end of the proenzyme. The autoendoproteolytic cleavage occurs by a canonical serine protease mechanism, in which the side chain hydroxyl group of the serine supplies its oxygen atom to form the C-terminus of the beta chain, while the remainder of the serine residue undergoes an oxidative deamination to produce ammonia and the pyruvoyl prosthetic group on the alpha chain. During this reaction, the Ser that is part of the protease active site of the proenzyme becomes the pyruvoyl prosthetic group, which constitutes an essential element of the active site of the mature decarboxylase.

The protein resides in the cell membrane. The catalysed reaction is a 1,2-diacyl-sn-glycero-3-phospho-L-serine + H(+) = a 1,2-diacyl-sn-glycero-3-phosphoethanolamine + CO2. It participates in phospholipid metabolism; phosphatidylethanolamine biosynthesis; phosphatidylethanolamine from CDP-diacylglycerol: step 2/2. Functionally, catalyzes the formation of phosphatidylethanolamine (PtdEtn) from phosphatidylserine (PtdSer). The protein is Phosphatidylserine decarboxylase proenzyme of Histophilus somni (strain 129Pt) (Haemophilus somnus).